Reading from the N-terminus, the 309-residue chain is Tagatose-6-phosphate kinase (309 aa).

The protein belongs to the carbohydrate kinase PfkB family. LacC subfamily.

The enzyme catalyses D-tagatofuranose 6-phosphate + ATP = D-tagatofuranose 1,6-bisphosphate + ADP + H(+). Its pathway is carbohydrate metabolism; D-tagatose 6-phosphate degradation; D-glyceraldehyde 3-phosphate and glycerone phosphate from D-tagatose 6-phosphate: step 1/2. This is Tagatose-6-phosphate kinase from Streptococcus pneumoniae (strain Hungary19A-6).